A 323-amino-acid chain; its full sequence is GMP reductase (323 aa).

The active-site Thioimidate intermediate is Cys-174. 203–226 is a binding site for NADP(+); sequence IIADGGIRHNGDIAKSVRFGASMV.

Belongs to the IMPDH/GMPR family. GuaC type 2 subfamily.

The enzyme catalyses IMP + NH4(+) + NADP(+) = GMP + NADPH + 2 H(+). Its function is as follows. Catalyzes the irreversible NADPH-dependent deamination of GMP to IMP. It functions in the conversion of nucleobase, nucleoside and nucleotide derivatives of G to A nucleotides, and in maintaining the intracellular balance of A and G nucleotides. In Oenococcus oeni (strain ATCC BAA-331 / PSU-1), this protein is GMP reductase.